The chain runs to 378 residues: Pre-B-cell leukemia transcription factor 4 (378 aa).

Residues 1–15 show a composition bias toward pro residues; sequence MAAPLRPVPPQPAPR. 2 disordered regions span residues 1–24 and 100–125; these read MAAP…APLG and VSRP…PNDN. Residues 22–214 form the PBC domain; the sequence is PLGHDTSDVL…VMTLRSRFLD (193 aa). The tract at residues 29-107 is PBC-A; sequence DVLQQIMAIT…EGVSRPEKRG (79 aa). Residues 109-120 are compositionally biased toward low complexity; it reads GAAAGSTATPGG. Residues 110 to 214 are PBC-B; sequence AAAGSTATPG…VMTLRSRFLD (105 aa). The segment at residues 215–277 is a DNA-binding region (homeobox; TALE-type); it reads ARRKRRNFSK…NKRIRYKKNT (63 aa). 2 disordered regions span residues 291 to 320 and 355 to 378; these read ASTV…PLPL and RAAP…AASN. The segment covering 356–370 has biased composition (low complexity); that stretch reads AAPQPASSPAGESGS.

This sequence belongs to the TALE/PBX homeobox family. As to expression, almost exclusively expressed in testis.

The protein resides in the nucleus. This chain is Pre-B-cell leukemia transcription factor 4 (Pbx4), found in Mus musculus (Mouse).